A 389-amino-acid chain; its full sequence is MRVLVRRCWGPPLAHGARRGRPSPQWRALARLGWEDCRDSRVREKPPWRVLFFGTDQFAREALRALHAARENKEEELIDKLEVVTMPSPSPKGLPVKQYAVQSQLPVYEWPDVGSGEYDVGVVASFGRLLNEALILKFPYGILNVHPSCLPRWRGPAPVIHTVLHGDTVTGVTIMQIRPKRFDVGPILKQETVPVPPKSTAKELEAVLSRLGANMLISVLKNLPESLSNGRQQPMEGATYAPKISAGTSCIKWEEQTSEQIFRLYRAIGNIIPLQTLWMANTIKLLDLVEVNSSVLADPKLTGQALIPGSVIYHKQSQILLVYCKDGWIGVRSVMLKKSLTATDFYNGYLHPWYQKNSQAQPSQCRFQTLRLPTKKKQKKTVAMQQCIE.

Belongs to the Fmt family.

It localises to the mitochondrion. The catalysed reaction is L-methionyl-tRNA(fMet) + (6R)-10-formyltetrahydrofolate = N-formyl-L-methionyl-tRNA(fMet) + (6S)-5,6,7,8-tetrahydrofolate + H(+). Its function is as follows. Methionyl-tRNA formyltransferase that formylates methionyl-tRNA in mitochondria and is crucial for translation initiation. This Homo sapiens (Human) protein is Methionyl-tRNA formyltransferase, mitochondrial (MTFMT).